A 403-amino-acid chain; its full sequence is Serine/threonine transporter SstT (403 aa).

9 helical membrane-spanning segments follow: residues 14-34 (VTQI…APAI), 44-64 (VFVS…VMAS), 79-99 (ILWL…FASM), 138-158 (ALLN…GVAL), 175-195 (GVTL…FGLV), 214-234 (LAVL…LIVF), 295-315 (MAGA…TLGI), 327-347 (VVAA…LLLI), and 353-373 (LFGI…IIGV).

The protein belongs to the dicarboxylate/amino acid:cation symporter (DAACS) (TC 2.A.23) family.

The protein localises to the cell inner membrane. The catalysed reaction is L-serine(in) + Na(+)(in) = L-serine(out) + Na(+)(out). It carries out the reaction L-threonine(in) + Na(+)(in) = L-threonine(out) + Na(+)(out). Involved in the import of serine and threonine into the cell, with the concomitant import of sodium (symport system). The protein is Serine/threonine transporter SstT of Pseudomonas putida (strain ATCC 47054 / DSM 6125 / CFBP 8728 / NCIMB 11950 / KT2440).